A 129-amino-acid polypeptide reads, in one-letter code: Glycine cleavage system H protein (129 aa).

The Lipoyl-binding domain occupies 24–106 (IAVIGITAYA…YGDGWLIKVR (83 aa)). Lysine 65 is subject to N6-lipoyllysine.

The protein belongs to the GcvH family. The glycine cleavage system is composed of four proteins: P, T, L and H. (R)-lipoate serves as cofactor.

In terms of biological role, the glycine cleavage system catalyzes the degradation of glycine. The H protein shuttles the methylamine group of glycine from the P protein to the T protein. This is Glycine cleavage system H protein from Synechococcus sp. (strain JA-3-3Ab) (Cyanobacteria bacterium Yellowstone A-Prime).